We begin with the raw amino-acid sequence, 140 residues long: ATP synthase epsilon chain (140 aa).

Belongs to the ATPase epsilon chain family. In terms of assembly, F-type ATPases have 2 components, CF(1) - the catalytic core - and CF(0) - the membrane proton channel. CF(1) has five subunits: alpha(3), beta(3), gamma(1), delta(1), epsilon(1). CF(0) has three main subunits: a, b and c.

Its subcellular location is the cell inner membrane. Functionally, produces ATP from ADP in the presence of a proton gradient across the membrane. This chain is ATP synthase epsilon chain, found in Neisseria meningitidis serogroup A / serotype 4A (strain DSM 15465 / Z2491).